The chain runs to 2185 residues: Genome polyprotein (2185 aa).

G2 carries the N-myristoyl glycine; by host lipid modification. At 2 to 1495 the chain is on the cytoplasmic side; it reads GAQVSTQKTG…HVSRAFICLQ (1494 aa). Residues 566 to 582 are amphipathic alpha-helix; that stretch reads FYQGPPGEAVERAIARV. Residues H872 and D890 each act as for protease 2A activity in the active site. The Zn(2+) site is built by C907 and C909. C961 functions as the For protease 2A activity in the catalytic mechanism. 2 residues coordinate Zn(2+): C967 and H969. The segment at 1101–1173 is membrane-binding; sequence NNNWLKKFTE…EQSAPSQSDQ (73 aa). The interval 1101-1239 is oligomerization; it reads NNNWLKKFTE…SPGAGKSVAT (139 aa). The tract at residues 1122-1126 is RNA-binding; the sequence is AVKIQ. The 157-residue stretch at 1205–1361 folds into the SF3 helicase domain; it reads EKKMSNYIQF…SMYSQNGKIN (157 aa). The Zn(2+) site is built by C1369, C1381, and C1386. The C4-type; degenerate zinc-finger motif lies at 1369–1386; the sequence is CDEECCPVNFKRCCPLVC. The RNA-binding stretch occupies residues 1413–1420; the sequence is EYNHRHSV. The oligomerization stretch occupies residues 1424–1429; that stretch reads LEALFQ. The stretch at 1496 to 1511 is an intramembrane region; the sequence is ALTTFVSVAGIIYIIY. The Cytoplasmic segment spans residues 1512–2185; that stretch reads KLFAGFQGAY…TLRRKWLDSF (674 aa). Y1521 carries the post-translational modification O-(5'-phospho-RNA)-tyrosine. The 179-residue stretch at 1541–1719 folds into the Peptidase C3 domain; the sequence is GPAFEFAVAM…FSAALLKHYF (179 aa). Active-site for protease 3C activity residues include H1580, E1611, and C1687. In terms of domain architecture, RdRp catalytic spans 1950–2066; it reads GHLIAFDYSG…SYPWPIDASL (117 aa). Positions 1956 and 2052 each coordinate Mg(2+).

The protein belongs to the picornaviruses polyprotein family. In terms of assembly, interacts with capsid protein VP1 and capsid protein VP3 to form heterotrimeric protomers. As to quaternary structure, interacts with capsid protein VP0, and capsid protein VP3 to form heterotrimeric protomers. Five protomers subsequently associate to form pentamers which serve as building blocks for the capsid. Interacts with capsid protein VP2, capsid protein VP3 and capsid protein VP4 following cleavage of capsid protein VP0. Interacts with capsid protein VP1 and capsid protein VP3 in the mature capsid. In terms of assembly, interacts with capsid protein VP0 and capsid protein VP1 to form heterotrimeric protomers. Five protomers subsequently associate to form pentamers which serve as building blocks for the capsid. Interacts with capsid protein VP4 in the mature capsid. Interacts with protein 2C; this interaction may be important for virion morphogenesis. As to quaternary structure, interacts with capsid protein VP1 and capsid protein VP3. Homodimer. In terms of assembly, homohexamer; forms a hexameric ring structure with 6-fold symmetry characteristic of AAA+ ATPases. Interacts (via N-terminus) with host RTN3 (via reticulon domain); this interaction is important for viral replication. Interacts with capsid protein VP3; this interaction may be important for virion morphogenesis. As to quaternary structure, interacts with protein 3CD. Homodimer. Interacts with host GBF1. Interacts (via GOLD domain) with host ACBD3 (via GOLD domain); this interaction allows the formation of a viral protein 3A/ACBD3 heterotetramer with a 2:2 stoichiometry, which will stimulate the recruitment of host PI4KB in order to synthesize PI4P at the viral RNA replication sites. In terms of assembly, interacts with RNA-directed RNA polymerase. As to quaternary structure, interacts with protein 3AB and with RNA-directed RNA polymerase. Interacts with Viral protein genome-linked and with protein 3CD. Mg(2+) serves as cofactor. In terms of processing, specific enzymatic cleavages in vivo by the viral proteases yield processing intermediates and the mature proteins. Myristoylation is required for the formation of pentamers during virus assembly. Further assembly of 12 pentamers and a molecule of genomic RNA generates the provirion. Post-translationally, during virion maturation, immature virions are rendered infectious following cleavage of VP0 into VP4 and VP2. This maturation seems to be an autocatalytic event triggered by the presence of RNA in the capsid and it is followed by a conformational change infectious virion. In terms of processing, myristoylation is required during RNA encapsidation and formation of the mature virus particle. VPg is uridylylated by the polymerase into VPg-pUpU. This acts as a nucleotide-peptide primer for the genomic RNA replication.

The protein localises to the virion. It is found in the host cytoplasm. It localises to the host cytoplasmic vesicle membrane. Its subcellular location is the host nucleus. The catalysed reaction is a ribonucleoside 5'-triphosphate + H2O = a ribonucleoside 5'-diphosphate + phosphate + H(+). It catalyses the reaction Selective cleavage of Tyr-|-Gly bond in the picornavirus polyprotein.. The enzyme catalyses RNA(n) + a ribonucleoside 5'-triphosphate = RNA(n+1) + diphosphate. It carries out the reaction Selective cleavage of Gln-|-Gly bond in the poliovirus polyprotein. In other picornavirus reactions Glu may be substituted for Gln, and Ser or Thr for Gly.. With respect to regulation, replication or transcription is subject to high level of random mutations by the nucleotide analog ribavirin. In terms of biological role, forms an icosahedral capsid of pseudo T=3 symmetry with capsid proteins VP2 and VP3. The capsid is 300 Angstroms in diameter, composed of 60 copies of each capsid protein and enclosing the viral positive strand RNA genome. Capsid protein VP1 mainly forms the vertices of the capsid. Capsid protein VP1 interacts with host cell receptor to provide virion attachment to target host cells. This attachment induces virion internalization. Tyrosine kinases are probably involved in the entry process. After binding to its receptor, the capsid undergoes conformational changes. Capsid protein VP1 N-terminus (that contains an amphipathic alpha-helix) and capsid protein VP4 are externalized. Together, they shape a pore in the host membrane through which viral genome is translocated to host cell cytoplasm. Its function is as follows. Forms an icosahedral capsid of pseudo T=3 symmetry with capsid proteins VP2 and VP3. The capsid is 300 Angstroms in diameter, composed of 60 copies of each capsid protein and enclosing the viral positive strand RNA genome. Lies on the inner surface of the capsid shell. After binding to the host receptor, the capsid undergoes conformational changes. Capsid protein VP4 is released, Capsid protein VP1 N-terminus is externalized, and together, they shape a pore in the host membrane through which the viral genome is translocated into the host cell cytoplasm. Functionally, component of immature procapsids, which is cleaved into capsid proteins VP4 and VP2 after maturation. Allows the capsid to remain inactive before the maturation step. In terms of biological role, cysteine protease that cleaves viral polyprotein and specific host proteins. It is responsible for the autocatalytic cleavage between the P1 and P2 regions, which is the first cleavage occurring in the polyprotein. Also cleaves the host translation initiation factor EIF4G1, in order to shut down the capped cellular mRNA translation. Inhibits the host nucleus-cytoplasm protein and RNA trafficking by cleaving host members of the nuclear pores. Counteracts stress granule formation probably by antagonizing its assembly or promoting its dissassembly. Cleaves and inhibits host IFIH1/MDA5, thereby inhibiting the type-I IFN production and the establishment of the antiviral state. Cleaves and inhibits host MAVS, thereby inhibiting the type-I IFN production and the establishment of the antiviral state. Its function is as follows. Plays an essential role in the virus replication cycle by acting as a viroporin. Creates a pore in the host endoplasmic reticulum and as a consequence releases Ca2+ in the cytoplasm of infected cell. In turn, high levels of cytoplasmic calcium may trigger membrane trafficking and transport of viral ER-associated proteins to viroplasms, sites of viral genome replication. Induces and associates with structural rearrangements of intracellular membranes. Displays RNA-binding, nucleotide binding and NTPase activities. May play a role in virion morphogenesis and viral RNA encapsidation by interacting with the capsid protein VP3. Functionally, localizes the viral replication complex to the surface of membranous vesicles. Together with protein 3CD binds the Cis-Active RNA Element (CRE) which is involved in RNA synthesis initiation. Acts as a cofactor to stimulate the activity of 3D polymerase, maybe through a nucleid acid chaperone activity. In terms of biological role, localizes the viral replication complex to the surface of membranous vesicles. It inhibits host cell endoplasmic reticulum-to-Golgi apparatus transport and causes the disassembly of the Golgi complex, possibly through GBF1 interaction. This would result in depletion of MHC, trail receptors and IFN receptors at the host cell surface. Plays an essential role in viral RNA replication by recruiting ACBD3 and PI4KB at the viral replication sites, thereby allowing the formation of the rearranged membranous structures where viral replication takes place. Its function is as follows. Acts as a primer for viral RNA replication and remains covalently bound to viral genomic RNA. VPg is uridylylated prior to priming replication into VPg-pUpU. The oriI viral genomic sequence may act as a template for this. The VPg-pUpU is then used as primer on the genomic RNA poly(A) by the RNA-dependent RNA polymerase to replicate the viral genome. During genome replication, the VPg-RNA linkage is removed by the host TDP2, thereby accelerating replication. During the late stage of the replication cycle, host TDP2 is excluded from sites of viral RNA synthesis and encapsidation, allowing for the generation of progeny virions. Involved in the viral replication complex and viral polypeptide maturation. It exhibits protease activity with a specificity and catalytic efficiency that is different from protease 3C. Protein 3CD lacks polymerase activity. Protein 3CD binds to the 5'UTR of the viral genome. Functionally, replicates the viral genomic RNA on the surface of intracellular membranes. May form linear arrays of subunits that propagate along a strong head-to-tail interaction called interface-I. Covalently attaches UMP to a tyrosine of VPg, which is used to prime RNA synthesis. The positive stranded RNA genome is first replicated at virus induced membranous vesicles, creating a dsRNA genomic replication form. This dsRNA is then used as template to synthesize positive stranded RNA genomes. ss(+)RNA genomes are either translated, replicated or encapsidated. In terms of biological role, major viral protease that mediates proteolytic processing of the polyprotein. Cleaves host EIF5B, contributing to host translation shutoff. Also cleaves host PABPC1, contributing to host translation shutoff. Cleaves host NLRP1, triggers host N-glycine-mediated degradation of the autoinhibitory NLRP1 N-terminal fragment. In Homo sapiens (Human), this protein is Genome polyprotein.